We begin with the raw amino-acid sequence, 245 residues long: Adenosylcobinamide-GDP ribazoletransferase (245 aa).

A run of 5 helical transmembrane segments spans residues 31 to 51, 61 to 81, 113 to 133, 138 to 158, and 192 to 212; these read FGRA…VLYA, PLLQ…ALHL, VAVV…AALL, AGLL…LFLT, and LAFG…FAWL.

The protein belongs to the CobS family. Requires Mg(2+) as cofactor.

It is found in the cell inner membrane. The enzyme catalyses alpha-ribazole + adenosylcob(III)inamide-GDP = adenosylcob(III)alamin + GMP + H(+). It catalyses the reaction alpha-ribazole 5'-phosphate + adenosylcob(III)inamide-GDP = adenosylcob(III)alamin 5'-phosphate + GMP + H(+). The protein operates within cofactor biosynthesis; adenosylcobalamin biosynthesis; adenosylcobalamin from cob(II)yrinate a,c-diamide: step 7/7. Functionally, joins adenosylcobinamide-GDP and alpha-ribazole to generate adenosylcobalamin (Ado-cobalamin). Also synthesizes adenosylcobalamin 5'-phosphate from adenosylcobinamide-GDP and alpha-ribazole 5'-phosphate. In Pseudomonas aeruginosa (strain ATCC 15692 / DSM 22644 / CIP 104116 / JCM 14847 / LMG 12228 / 1C / PRS 101 / PAO1), this protein is Adenosylcobinamide-GDP ribazoletransferase.